The chain runs to 160 residues: uncharacterized protein (160 aa).

This is an uncharacterized protein from Mycobacterium tuberculosis (strain ATCC 25618 / H37Rv).